A 680-amino-acid chain; its full sequence is Probable ATP-dependent RNA helicase pitchoune (680 aa).

A disordered region spans residues 1-168; that stretch reads MSIREKLLMK…GKPAKDDEPF (168 aa). Polar residues predominate over residues 29-42; that stretch reads KNAQKQEPPKQNGN. The span at 59–69 shows a compositional bias: acidic residues; sequence DEDDDLEEDFQ. Over residues 74-83 the composition is skewed to basic residues; sequence PKKKQQKQPP. Residues 95–141 show a composition bias toward acidic residues; that stretch reads SESDDDEQEDEADEDSDLDEVAEVDEEDVDSGSEDDDQQEDEDEEEP. A Q motif motif is present at residues 187-215; the sequence is FASLKGAVSEATLRAIKEMGFTEMTEIQS. The region spanning 218-393 is the Helicase ATP-binding domain; the sequence is LTPLLKGRDL…KLALKSEPIY (176 aa). 231-238 serves as a coordination point for ATP; sequence AQTGSGKT. A DEVD box motif is present at residues 341 to 344; that stretch reads DEVD. The 171-residue stretch at 407 to 577 folds into the Helicase C-terminal domain; sequence GLEQGYIVCP…DIQLQLEKLI (171 aa). Residues 659 to 680 form a disordered region; sequence GSASKQRHFKQVNRDQAKKFMR. A compositionally biased stretch (basic and acidic residues) spans 670 to 680; sequence VNRDQAKKFMR.

This sequence belongs to the DEAD box helicase family. DDX18/HAS1 subfamily.

It localises to the nucleus. Its subcellular location is the nucleolus. It catalyses the reaction ATP + H2O = ADP + phosphate + H(+). In terms of biological role, probable RNA-dependent helicase. Functions in cell growth and proliferation. May have a role in ribosome biogenesis and, consequently, in protein biosynthesis. The sequence is that of Probable ATP-dependent RNA helicase pitchoune (pit) from Drosophila melanogaster (Fruit fly).